A 113-amino-acid chain; its full sequence is MHELGITQNIVAIVSEYAQGSKVNRILLEIGKLSAIMPDAVQFCFDICSKGTSLEGAVLEIREIPGLAKCRQCGAEIALEKPFGICGCGSVHLDVITGEELKIKEIEVEEVCV.

Ni(2+) is bound at residue His2. Residues Cys70, Cys73, Cys86, and Cys88 each coordinate Zn(2+).

This sequence belongs to the HypA/HybF family.

Involved in the maturation of [NiFe] hydrogenases. Required for nickel insertion into the metal center of the hydrogenase. The protein is Hydrogenase maturation factor HypA of Nostoc sp. (strain PCC 7120 / SAG 25.82 / UTEX 2576).